The following is a 176-amino-acid chain: ADP-ribosylation factor-like protein 11 (176 aa).

G2 carries the N-myristoyl glycine lipid modification. GTP contacts are provided by residues 19–26, 63–67, and 122–125; these read GLDSAGKT, DIGGQ, and NKQE.

This sequence belongs to the small GTPase superfamily. Arf family.

In terms of biological role, may play a role in apoptosis. May act as a tumor suppressor. This chain is ADP-ribosylation factor-like protein 11 (Arl11), found in Mus musculus (Mouse).